Consider the following 511-residue polypeptide: Sorting nexin MVP1 (511 aa).

Residues 1–36 (MDNYEGSDPWNTSSNAWTKDDDHVVSTTNSEPSLNG) are disordered. The segment covering 25 to 36 (VSTTNSEPSLNG) has biased composition (polar residues). The region spanning 128-247 (DADIIIIEEI…TFLTVRTDLT (120 aa)) is the PX domain. Arginine 172, serine 174, lysine 198, and arginine 213 together coordinate a 1,2-diacyl-sn-glycero-3-phospho-(1D-myo-inositol-3-phosphate).

It belongs to the sorting nexin family. Homodimer. Forms an autoinhibited tetramer consisting of 2 homodimers that self-interact, wherein the membrane-interacting BAR surfaces are sequestered and the PX lipid-binding sites are occluded. Interacts with VPS1.

It localises to the cytoplasm. The protein resides in the endosome membrane. Required for vacuolar protein sorting. Component of the retromer-mediated endosome-to-Golgi retrograde pathway. Required for efficient cargo export from the endosome, promoting VPS1-mediated fission of retromer-coated tubules that bud from the endosome. This chain is Sorting nexin MVP1 (MVP1), found in Saccharomyces cerevisiae (strain ATCC 204508 / S288c) (Baker's yeast).